The chain runs to 1176 residues: Carbamoyl phosphate synthase arginine-specific large chain (1176 aa).

The transit peptide at 1-11 (MLRSISIASRA) directs the protein to the mitochondrion. The carboxyphosphate synthetic domain stretch occupies residues 70-465 (SRSPDVKKVL…SLQKAIRQVD (396 aa)). ATP is bound by residues Arg-197, Arg-237, Gly-243, Gly-244, Lys-273, Leu-275, Glu-280, Gly-306, Thr-307, His-308, Gln-348, and Glu-362. Residues 201–391 (VQALNEIDIP…LAYTAAKIAL (191 aa)) form the ATP-grasp 1 domain. Residues Gln-348, Glu-362, and Asn-364 each coordinate Mg(2+). Residues Gln-348, Glu-362, and Asn-364 each contribute to the Mn(2+) site. Residues 466–610 (PNFAGFEAYW…YTSYNATTHD (145 aa)) are oligomerization domain. Residues 611 to 997 (VKFDNGTMVL…AYWAALLSVN (387 aa)) form a carbamoyl phosphate synthetic domain region. Positions 734-931 (SSILDSIGVD…FIDTASAAIM (198 aa)) constitute an ATP-grasp 2 domain. The ATP site is built by Arg-770, Gln-809, Ile-811, Glu-816, Gly-841, Val-842, His-843, Ser-844, Gln-884, and Glu-902. Mg(2+) is bound by residues Gln-884, Glu-902, and Asn-904. The Mn(2+) site is built by Gln-884, Glu-902, and Asn-904. The allosteric domain stretch occupies residues 998-1137 (GMKLPKANSG…NPIPYSEGFK (140 aa)). The 156-residue stretch at 999–1154 (MKLPKANSGI…RDFVGEAATT (156 aa)) folds into the MGS-like domain.

Belongs to the CarB family. As to quaternary structure, heterodimer composed of 2 chains; the small (or glutamine) chain promotes the hydrolysis of glutamine to ammonia, which is used by the large (or ammonia) chain to synthesize carbamoyl phosphate. Mg(2+) serves as cofactor. Mn(2+) is required as a cofactor.

It localises to the mitochondrion. It carries out the reaction hydrogencarbonate + L-glutamine + 2 ATP + H2O = carbamoyl phosphate + L-glutamate + 2 ADP + phosphate + 2 H(+). The enzyme catalyses hydrogencarbonate + NH4(+) + 2 ATP = carbamoyl phosphate + 2 ADP + phosphate + 2 H(+). Its pathway is amino-acid biosynthesis; L-arginine biosynthesis; carbamoyl phosphate from bicarbonate: step 1/1. Functionally, large subunit of the arginine-specific carbamoyl phosphate synthase (CPSase). CPSase catalyzes the formation of carbamoyl phosphate from the ammonia moiety of glutamine, hydrogencarbonate, and phosphate donated by ATP, constituting the first step of 2 biosynthetic pathways, one leading to arginine and/or urea and the other to pyrimidine nucleotides. The large subunit (synthetase) binds the substrates ammonia (free or transferred from glutamine from the small subunit), hydrogencarbonate and ATP and carries out an ATP-coupled ligase reaction, activating hydrogencarbonate by forming carboxy phosphate which reacts with ammonia to form carbamoyl phosphate. This chain is Carbamoyl phosphate synthase arginine-specific large chain (argA), found in Cutaneotrichosporon cutaneum (Yeast).